The chain runs to 83 residues: MDSADPQLARFLHQLQAETQRQKFTEQVHTLTGRCWDVCFSDYRPPSKMDGKTQTCIQNCVNRMIDASNFMVEHLSKMNGGSA.

The Twin CX3C motif motif lies at cysteine 35–cysteine 60. 2 disulfide bridges follow: cysteine 35–cysteine 60 and cysteine 39–cysteine 56.

The protein belongs to the small Tim family. As to quaternary structure, heterohexamer; composed of 3 copies of ddp-1/tim-8 and 3 copies of tin-13/tim-13, named soluble 70 kDa complex. Associates with the TIM22 complex, whose core is composed of tim-22.

The protein resides in the mitochondrion inner membrane. Its function is as follows. Mitochondrial intermembrane chaperone that participates in the import and insertion of some multi-pass transmembrane proteins into the mitochondrial inner membrane. Also required for the transfer of beta-barrel precursors from the TOM complex to the sorting and assembly machinery (SAM complex) of the outer membrane. Acts as a chaperone-like protein that protects the hydrophobic precursors from aggregation and guide them through the mitochondrial intermembrane space. The ddp-1/tim-8-tim-13 complex mediates the import of some proteins while the predominant tim-9/tin-9.1-tim-10/tin-10 70 kDa complex mediates the import of much more proteins. In Caenorhabditis briggsae, this protein is Mitochondrial import inner membrane translocase subunit Tim8.